The following is a 535-amino-acid chain: Portal protein (535 aa).

It belongs to the podoviridae portal protein family. Homododecamer. Interacts with major capsid protein. Interacts with the tail tube proteins gp11 and gp12. Interacts with the terminase large subunit. Interacts with the internal virion protein gp14.

It is found in the virion. Its function is as follows. Forms the portal vertex of the capsid. This portal plays critical roles in head assembly, genome packaging, neck/tail attachment, and genome ejection. The portal protein multimerizes as a single ring-shaped homododecamer arranged around a central channel. The chain is Portal protein (8) from Enterobacteria phage T3 (Bacteriophage T3).